The following is a 204-amino-acid chain: NAD(P)H dehydrogenase (quinone) (204 aa).

The 192-residue stretch at 3-194 (VLIVFYSMYG…AGARYQGRHV (192 aa)) folds into the Flavodoxin-like domain. FMN is bound by residues 9–14 (SMYGHI) and 82–84 (TRF). An NAD(+)-binding site is contributed by tyrosine 11. Residue tryptophan 102 participates in substrate binding. Histidine 138 serves as a coordination point for FMN.

The protein belongs to the WrbA family. It depends on FMN as a cofactor.

It carries out the reaction a quinone + NADH + H(+) = a quinol + NAD(+). The enzyme catalyses a quinone + NADPH + H(+) = a quinol + NADP(+). This Syntrophobacter fumaroxidans (strain DSM 10017 / MPOB) protein is NAD(P)H dehydrogenase (quinone).